We begin with the raw amino-acid sequence, 484 residues long: AMP nucleosidase (484 aa).

The protein belongs to the AMP nucleosidase family.

It catalyses the reaction AMP + H2O = adenine + D-ribose 5-phosphate. In terms of biological role, catalyzes the hydrolysis of the N-glycosidic bond of AMP to form adenine and ribose 5-phosphate. Involved in regulation of AMP concentrations. This Escherichia coli O157:H7 protein is AMP nucleosidase.